The following is a 236-amino-acid chain: tRNA (guanine-N(1)-)-methyltransferase (236 aa).

Residues Gly-116 and 136-141 (LGDFVL) contribute to the S-adenosyl-L-methionine site.

The protein belongs to the RNA methyltransferase TrmD family. Homodimer.

The protein resides in the cytoplasm. It catalyses the reaction guanosine(37) in tRNA + S-adenosyl-L-methionine = N(1)-methylguanosine(37) in tRNA + S-adenosyl-L-homocysteine + H(+). Its function is as follows. Specifically methylates guanosine-37 in various tRNAs. This Thiobacillus denitrificans (strain ATCC 25259 / T1) protein is tRNA (guanine-N(1)-)-methyltransferase.